The sequence spans 978 residues: MTFHKTFGYGCIVLICFELLFAGVETSSENDDEYLTQKEIILEKSYHGLIRENETLVEITPLIKVNEEKICNFHILKKPYHEIPFKIELVNNLGILKARRTLNCENRKSYHFEICAIYCDGTPSNTANVHITVIDVNEYAPTFLEPSYVIEVDEGRLYNEILRVEASDKDCTPLFGDVCKYEILNNDEPFSIDNEGSIKNTEPLSHKASHNHILSVVAYDCAMKESAPIMVSIKVRRVCETKFVGMPERIDYTSGSTESLQLFPNARLDLCDISCKNEEDLRIHSSIALKTKHISFGCDRDISNCTSGQKVKDLLPHGAEWTKELSYDEGLEPIFHFDGSTGVVVPATVIDHYDFSSQPFSILTLFRHNSQVEINKHVKEHIVCSADDHKMNRHHMALFVRNCRLIFLLRKNFNEGDLNIFSPAEWRWKIPEVCDNEWHHYVLNVEDSSKVDLFIDGVRFENSIENRHSNPEVIDDWPLHAAHGVNTSLAIGACYQSLENRLKHGFNGDISEVKVSLNSVLTAEDIKCGTTCAEHLLAPKPLQSNNEKSYSDNSQIKENIEMNEIYISAKNKHDIEQFMRKVQYINTKQKPTVGRRNIEVLTTLNCKNESSLRLPPIETYIMVNEPIAPLGIDIDVVSASLETSDLTPPSYSPKIAISGTSNKLVSYQEIKLGVHILEKTCIDSVSKNNGKLEEKNHIDSCSVVVFPSLNPDHEDIKIDGDESLSSSMDIKTNINKDGVEMIGKDTISNYINVLRSLVYSNKKPAYYLNRVFKLSCAQQSSQYKSGEYTLTLTVLHPKQTLFKSTNVLPSSLSKVNFIGNTDNETSFHRNSGSVNGNDNNQPTESKVYSYSLLHTNNVQEPKSHIHSFIHKAEGSHVTMLIILVSVFLAVLLCGVSIARLKNNQKYIEHHQPCPKISDDGLIWDDSALTITINPMQADVTSDASSESENSESEDEEALKDGFTHINQLEWDNSNIFQQ.

Residues 1–26 form the signal peptide; the sequence is MTFHKTFGYGCIVLICFELLFAGVET. The Extracellular segment spans residues 27 to 876; sequence SSENDDEYLT…SFIHKAEGSH (850 aa). Cadherin domains are found at residues 37–143 and 144–249; these read QKEI…APTF and LEPS…MPER. An N-linked (GlcNAc...) asparagine glycan is attached at Asn-53. 4 N-linked (GlcNAc...) asparagine glycosylation sites follow: Asn-304, Asn-486, Asn-608, and Asn-823. The chain crosses the membrane as a helical span at residues 877 to 897; the sequence is VTMLIILVSVFLAVLLCGVSI. Topologically, residues 898-978 are cytoplasmic; sequence ARLKNNQKYI…EWDNSNIFQQ (81 aa). The interval 937–958 is disordered; sequence ADVTSDASSESENSESEDEEAL. Over residues 948 to 957 the composition is skewed to acidic residues; sequence ENSESEDEEA.

This sequence belongs to the calsyntenin family.

It is found in the postsynaptic cell membrane. Its function is as follows. Postsynaptic adhesion molecule that binds to presynaptic neurexins to mediate both excitatory and inhibitory synapse formation. Promotes synapse development by acting as a cell adhesion molecule at the postsynaptic membrane, which associates with neurexin-alpha at the presynaptic membrane. The polypeptide is Calsyntenin-1 (Cals) (Drosophila melanogaster (Fruit fly)).